Consider the following 287-residue polypeptide: NAD kinase (287 aa).

Residue aspartate 56 is the Proton acceptor of the active site. NAD(+)-binding positions include 56-57 (DG), arginine 61, 128-129 (ND), and aspartate 156.

It belongs to the NAD kinase family. A divalent metal cation serves as cofactor.

The protein resides in the cytoplasm. It carries out the reaction NAD(+) + ATP = ADP + NADP(+) + H(+). Involved in the regulation of the intracellular balance of NAD and NADP, and is a key enzyme in the biosynthesis of NADP. Catalyzes specifically the phosphorylation on 2'-hydroxyl of the adenosine moiety of NAD to yield NADP. This Thermomicrobium roseum (strain ATCC 27502 / DSM 5159 / P-2) protein is NAD kinase.